Here is a 315-residue protein sequence, read N- to C-terminus: MILLFYTSSFILDCLLGDPYSWPHPIKAIGNLIKWLTIILRKIFHGKSLYFAGGLLFVLTVGMTGAVSWFILFLSAKIAYWLYVAVFVYLGYTTLAMTCLAKEARKIQRTLADGDLAAARVQVGMIVGRDTDKLTAEEISKATIETVAENTADGVIAPLFYLFIGGPVLALMYKAVNTLDSMVGYKNEKYRAIGFVSAKMDDIANFIPARLAWFFLVIASFILRYDGRASWQIGLRDRKNHTSPNCAYPEGAVAGALGITLGGTHEYFGETVVKPTIGSGTKPVSEKEISQTIHLLYMASTIAFIMFASIYLLLF.

The next 5 membrane-spanning stretches (helical) occupy residues 54–74, 78–98, 152–172, 203–223, and 295–315; these read GLLF…ILFL, IAYW…LAMT, ADGV…LALM, IANF…SFIL, and LLYM…LLLF.

Belongs to the CobD/CbiB family.

The protein resides in the cell membrane. It functions in the pathway cofactor biosynthesis; adenosylcobalamin biosynthesis. Converts cobyric acid to cobinamide by the addition of aminopropanol on the F carboxylic group. The sequence is that of Cobalamin biosynthesis protein CobD from Listeria monocytogenes serovar 1/2a (strain ATCC BAA-679 / EGD-e).